The following is a 113-amino-acid chain: Cytochrome c2 (113 aa).

Heme c is bound by residues Cys15, Cys18, His19, and Met92.

It belongs to the cytochrome c family. Post-translationally, binds 1 heme c group covalently per subunit.

Its function is as follows. Cytochrome c2 is found mainly in purple, non-sulfur, photosynthetic bacteria where it functions as the electron donor to the oxidized bacteriochlorophyll in the photophosphorylation pathway. However, it may also have a role in the respiratory chain and is found in some non-photosynthetic bacteria. This chain is Cytochrome c2, found in Pararhodospirillum photometricum (Rhodospirillum photometricum).